We begin with the raw amino-acid sequence, 305 residues long: NADH-cytochrome b5 reductase 1 (305 aa).

Residues 8–28 traverse the membrane as a helical segment; that stretch reads VLLASLGVGLLTLLGVALGAY. The region spanning 44–156 is the FAD-binding FR-type domain; the sequence is NEKYQLRLLD…RGPSGLLTYA (113 aa). Residues 136 to 166 and 175 to 210 each bind FAD; these read DSLK…IQPN and VARN…QCFL.

It belongs to the flavoprotein pyridine nucleotide cytochrome reductase family. Requires FAD as cofactor.

The protein resides in the membrane. It catalyses the reaction 2 Fe(III)-[cytochrome b5] + NADH = 2 Fe(II)-[cytochrome b5] + NAD(+) + H(+). NADH-cytochrome b5 reductases are involved in desaturation and elongation of fatty acids, cholesterol biosynthesis, drug metabolism, and, in erythrocyte, methemoglobin reduction. The chain is NADH-cytochrome b5 reductase 1 (CYB5R1) from Bos taurus (Bovine).